Reading from the N-terminus, the 417-residue chain is Phosphoglycerate kinase 2 (417 aa).

The residue at position 2 (Ser2) is an N-acetylserine. Phosphoserine occurs at positions 2 and 4. An N6-acetyllysine modification is found at Lys11. (2R)-3-phosphoglycerate-binding residues include Val23, Asp24, Phe25, Asn26, Gln38, and Arg39. The residue at position 48 (Lys48) is an N6-acetyllysine. Positions 62, 63, 65, and 66 each coordinate (2R)-3-phosphoglycerate. An N6-acetyllysine mark is found at Lys75, Lys86, and Lys97. Leu122 and Arg123 together coordinate (2R)-3-phosphoglycerate. 2 positions are modified to N6-acetyllysine: Lys131 and Lys146. Residues His170 and Arg171 each contribute to the (2R)-3-phosphoglycerate site. Phosphotyrosine is present on Tyr196. Lys199 bears the N6-acetyllysine mark. Residue Gly214 participates in ADP binding. Residue Gly214 participates in CDP binding. The AMP site is built by Ala215 and Lys216. Ala215 lines the ATP pocket. Ala215 is a binding site for Mg(2+). Mg(2+)-binding residues include Ala218 and Asp219. Asp219 serves as a coordination point for CDP. Lys220 serves as a coordination point for AMP. Residue Lys220 participates in ATP binding. Residue Gly238 participates in ADP binding. Gly238 contributes to the CDP binding site. Gly239 provides a ligand contact to AMP. An ATP-binding site is contributed by Gly239. N6-acetyllysine occurs at positions 267 and 291. Residue Gly313 coordinates AMP. Gly313 contributes to the ATP binding site. CDP is bound by residues Gly338 and Phe343. An ADP-binding site is contributed by Phe343. An AMP-binding site is contributed by Glu344. Residues Glu344, Asp375, and Thr376 each contribute to the ATP site. Asp375 serves as a coordination point for Mg(2+).

It belongs to the phosphoglycerate kinase family. In terms of assembly, monomer. Mg(2+) serves as cofactor.

The protein resides in the cytoplasm. The enzyme catalyses (2R)-3-phosphoglycerate + ATP = (2R)-3-phospho-glyceroyl phosphate + ADP. It participates in carbohydrate degradation; glycolysis; pyruvate from D-glyceraldehyde 3-phosphate: step 2/5. In terms of biological role, essential for sperm motility and male fertility but is not required for the completion of spermatogenesis. The protein is Phosphoglycerate kinase 2 (PGK2) of Macaca fascicularis (Crab-eating macaque).